A 299-amino-acid polypeptide reads, in one-letter code: Nitrogenase iron protein (299 aa).

11 to 18 (GKGGIGKS) lines the ATP pocket. Residue C99 coordinates [4Fe-4S] cluster. R102 carries the post-translational modification ADP-ribosylarginine; by dinitrogenase reductase ADP-ribosyltransferase. C133 is a [4Fe-4S] cluster binding site.

It belongs to the NifH/BchL/ChlL family. In terms of assembly, homodimer. Requires [4Fe-4S] cluster as cofactor. In terms of processing, the reversible ADP-ribosylation of Arg-102 inactivates the nitrogenase reductase and regulates nitrogenase activity.

It carries out the reaction N2 + 8 reduced [2Fe-2S]-[ferredoxin] + 16 ATP + 16 H2O = H2 + 8 oxidized [2Fe-2S]-[ferredoxin] + 2 NH4(+) + 16 ADP + 16 phosphate + 6 H(+). Its function is as follows. The key enzymatic reactions in nitrogen fixation are catalyzed by the nitrogenase complex, which has 2 components: the iron protein and the molybdenum-iron protein. The sequence is that of Nitrogenase iron protein from Methylobacterium nodulans (strain LMG 21967 / CNCM I-2342 / ORS 2060).